The sequence spans 284 residues: Shikimate dehydrogenase (NADP(+)) (284 aa).

Residues Ser-20–Ser-22 and Ser-67 contribute to the shikimate site. Lys-71 functions as the Proton acceptor in the catalytic mechanism. Asp-83 contributes to the NADP(+) binding site. Shikimate contacts are provided by Asn-92 and Asp-107. Residues Gly-129–Ala-133 and Ile-227 each bind NADP(+). Tyr-229 is a shikimate binding site. Residue Gly-250 coordinates NADP(+).

The protein belongs to the shikimate dehydrogenase family. As to quaternary structure, homodimer.

It catalyses the reaction shikimate + NADP(+) = 3-dehydroshikimate + NADPH + H(+). It participates in metabolic intermediate biosynthesis; chorismate biosynthesis; chorismate from D-erythrose 4-phosphate and phosphoenolpyruvate: step 4/7. Its function is as follows. Involved in the biosynthesis of the chorismate, which leads to the biosynthesis of aromatic amino acids. Catalyzes the reversible NADPH linked reduction of 3-dehydroshikimate (DHSA) to yield shikimate (SA). In Streptococcus pneumoniae serotype 2 (strain D39 / NCTC 7466), this protein is Shikimate dehydrogenase (NADP(+)).